A 541-amino-acid chain; its full sequence is Putative nucleobase-ascorbate transporter 10 (541 aa).

Helical transmembrane passes span 52–72, 79–99, 101–121, 141–161, 173–193, 196–216, 235–255, 299–319, 376–396, 397–417, 433–453, and 476–496; these read LLSL…MGGG, VIQT…FFGT, LPVI…IIYS, IQGA…LGVW, IAPL…PLLA, VEVG…LPRF, GMIL…SSGV, SFAM…LFYA, RVIQ…KFGA, FFAS…LCFV, FNIK…PQYF, and VIFM…DCTL.

It belongs to the nucleobase:cation symporter-2 (NCS2) (TC 2.A.40) family.

It is found in the membrane. This is Putative nucleobase-ascorbate transporter 10 (NAT10) from Arabidopsis thaliana (Mouse-ear cress).